Consider the following 350-residue polypeptide: Ferrochelatase (350 aa).

Fe cation-binding residues include His220 and Glu301.

Belongs to the ferrochelatase family.

The protein resides in the cytoplasm. The catalysed reaction is heme b + 2 H(+) = protoporphyrin IX + Fe(2+). It functions in the pathway porphyrin-containing compound metabolism; protoheme biosynthesis; protoheme from protoporphyrin-IX: step 1/1. Catalyzes the ferrous insertion into protoporphyrin IX. The polypeptide is Ferrochelatase (Brucella anthropi (strain ATCC 49188 / DSM 6882 / CCUG 24695 / JCM 21032 / LMG 3331 / NBRC 15819 / NCTC 12168 / Alc 37) (Ochrobactrum anthropi)).